A 331-amino-acid chain; its full sequence is 6-phosphogluconolactonase (331 aa).

Position 287 is an N6-acetyllysine (K287).

Belongs to the cycloisomerase 2 family.

The enzyme catalyses 6-phospho-D-glucono-1,5-lactone + H2O = 6-phospho-D-gluconate + H(+). It functions in the pathway carbohydrate degradation; pentose phosphate pathway; D-ribulose 5-phosphate from D-glucose 6-phosphate (oxidative stage): step 2/3. In terms of biological role, catalyzes the hydrolysis of 6-phosphogluconolactone to 6-phosphogluconate. This is 6-phosphogluconolactonase from Escherichia coli O6:K15:H31 (strain 536 / UPEC).